A 224-amino-acid polypeptide reads, in one-letter code: BTB/POZ domain-containing protein At5g48510 (224 aa).

The BTB domain occupies 24 to 98; that stretch reads VDVMLKAKNS…ICSDGSMLSA (75 aa).

In terms of assembly, interacts with CUL3A.

It functions in the pathway protein modification; protein ubiquitination. Its function is as follows. May act as a substrate-specific adapter of an E3 ubiquitin-protein ligase complex (CUL3-RBX1-BTB) which mediates the ubiquitination and subsequent proteasomal degradation of target proteins. The chain is BTB/POZ domain-containing protein At5g48510 from Arabidopsis thaliana (Mouse-ear cress).